Reading from the N-terminus, the 363-residue chain is 3-dehydroquinate synthase (363 aa).

NAD(+) is bound by residues 109 to 113 (GATTD), 133 to 134 (TT), Lys146, and Lys155. The Zn(2+) site is built by Glu188, His251, and His267.

Belongs to the sugar phosphate cyclases superfamily. Dehydroquinate synthase family. The cofactor is NAD(+). Co(2+) is required as a cofactor. Requires Zn(2+) as cofactor.

It is found in the cytoplasm. It catalyses the reaction 7-phospho-2-dehydro-3-deoxy-D-arabino-heptonate = 3-dehydroquinate + phosphate. It participates in metabolic intermediate biosynthesis; chorismate biosynthesis; chorismate from D-erythrose 4-phosphate and phosphoenolpyruvate: step 2/7. Functionally, catalyzes the conversion of 3-deoxy-D-arabino-heptulosonate 7-phosphate (DAHP) to dehydroquinate (DHQ). This is 3-dehydroquinate synthase from Streptomyces avermitilis (strain ATCC 31267 / DSM 46492 / JCM 5070 / NBRC 14893 / NCIMB 12804 / NRRL 8165 / MA-4680).